The sequence spans 395 residues: Elongation factor Ts, mitochondrial (395 aa).

Residues 1–63 (MAFARAVRRP…RGFGNFIRSF (63 aa)) constitute a mitochondrion transit peptide.

The protein belongs to the EF-Ts family.

It localises to the mitochondrion. Functionally, associates with the EF-Tu.GDP complex and induces the exchange of GDP to GTP. It remains bound to the aminoacyl-tRNA.EF-Tu.GTP complex up to the GTP hydrolysis stage on the ribosome. The chain is Elongation factor Ts, mitochondrial from Arabidopsis thaliana (Mouse-ear cress).